Here is a 295-residue protein sequence, read N- to C-terminus: Diaminopimelate epimerase (295 aa).

Residues Asn11 and Asn78 each coordinate substrate. Residue Cys87 is the Proton donor of the active site. Substrate contacts are provided by residues 88–89 (GN), Asn163, Asn199, and 220–221 (ER). Cys229 acts as the Proton acceptor in catalysis. 230 to 231 (GT) contributes to the substrate binding site.

It belongs to the diaminopimelate epimerase family. In terms of assembly, homodimer.

The protein resides in the cytoplasm. It carries out the reaction (2S,6S)-2,6-diaminopimelate = meso-2,6-diaminopimelate. Its pathway is amino-acid biosynthesis; L-lysine biosynthesis via DAP pathway; DL-2,6-diaminopimelate from LL-2,6-diaminopimelate: step 1/1. Its function is as follows. Catalyzes the stereoinversion of LL-2,6-diaminopimelate (L,L-DAP) to meso-diaminopimelate (meso-DAP), a precursor of L-lysine and an essential component of the bacterial peptidoglycan. The sequence is that of Diaminopimelate epimerase from Mycobacteroides abscessus (strain ATCC 19977 / DSM 44196 / CCUG 20993 / CIP 104536 / JCM 13569 / NCTC 13031 / TMC 1543 / L948) (Mycobacterium abscessus).